The chain runs to 500 residues: Probable cytosol aminopeptidase (500 aa).

Mn(2+) contacts are provided by K265 and D270. K277 is a catalytic residue. D288, D347, and E349 together coordinate Mn(2+). R351 is a catalytic residue.

It belongs to the peptidase M17 family. It depends on Mn(2+) as a cofactor.

The protein resides in the cytoplasm. It catalyses the reaction Release of an N-terminal amino acid, Xaa-|-Yaa-, in which Xaa is preferably Leu, but may be other amino acids including Pro although not Arg or Lys, and Yaa may be Pro. Amino acid amides and methyl esters are also readily hydrolyzed, but rates on arylamides are exceedingly low.. The enzyme catalyses Release of an N-terminal amino acid, preferentially leucine, but not glutamic or aspartic acids.. Presumably involved in the processing and regular turnover of intracellular proteins. Catalyzes the removal of unsubstituted N-terminal amino acids from various peptides. This is Probable cytosol aminopeptidase from Corynebacterium glutamicum (strain ATCC 13032 / DSM 20300 / JCM 1318 / BCRC 11384 / CCUG 27702 / LMG 3730 / NBRC 12168 / NCIMB 10025 / NRRL B-2784 / 534).